The sequence spans 216 residues: Adenylate kinase (216 aa).

10–15 is an ATP binding site; that stretch reads GAGKGT. Positions 30-59 are NMP; sequence STGDMLRAAVKAGTPLGLELKKVMDAGQLV. AMP is bound by residues threonine 31, arginine 36, 57–59, 85–88, and glutamine 92; these read QLV and GFPR. Residues 122-159 form an LID region; that stretch reads GRRVHLASGRTYHIQYNPPKVEGKDDVTGEDLIQRDDD. ATP is bound by residues arginine 123 and 132 to 133; that span reads TY. Residues arginine 156 and arginine 167 each contribute to the AMP site. Position 202 (glycine 202) interacts with ATP.

Belongs to the adenylate kinase family. In terms of assembly, monomer.

It localises to the cytoplasm. The catalysed reaction is AMP + ATP = 2 ADP. It participates in purine metabolism; AMP biosynthesis via salvage pathway; AMP from ADP: step 1/1. Functionally, catalyzes the reversible transfer of the terminal phosphate group between ATP and AMP. Plays an important role in cellular energy homeostasis and in adenine nucleotide metabolism. This is Adenylate kinase from Pseudomonas putida (strain GB-1).